Here is a 1022-residue protein sequence, read N- to C-terminus: Sodium/potassium-transporting ATPase subunit alpha (1022 aa).

Positions 1-5 are excised as a propeptide; the sequence is MGKGA. The interval 1–34 is disordered; that stretch reads MGKGAASEKYQPAATSENAKNSKKSKSKTTDLDE. At 6–87 the chain is on the cytoplasmic side; the sequence is ASEKYQPAAT…NALTPPPTTP (82 aa). A Phosphoserine; by PKC modification is found at serine 16. Residues 82–84 are interaction with phosphoinositide-3 kinase; the sequence is PPP. Residues 88–108 form a helical membrane-spanning segment; the sequence is EWIKFCRQLFGGFSILLWTGA. Over 109–131 the chain is Lumenal; that stretch reads ILCFLAYGIQVATVDNPANDNLY. The helical transmembrane segment at 132-152 threads the bilayer; the sequence is LGVVLSTVVIITGCFSYYQEA. Over 153–288 the chain is Cytoplasmic; sequence KSSKIMDSFK…VGQTPIAAEI (136 aa). A disordered region spans residues 215–235; it reads NSSLTGESEPQSRSPEYSSEN. Residues 289-308 form a helical membrane-spanning segment; it reads EHFIHIITGVAVFLGVSFFI. At 309–320 the chain is on the lumenal side; the sequence is LSLILGYTWLEA. A helical membrane pass occupies residues 321–338; the sequence is VIFLIGIIVANVPEGLLA. Over 339–771 the chain is Cytoplasmic; that stretch reads TVTVCLTLTA…EEGRLIFDNL (433 aa). Catalysis depends on aspartate 376, which acts as the 4-aspartylphosphate intermediate. Aspartate 716 and aspartate 720 together coordinate Mg(2+). The helical transmembrane segment at 772 to 791 threads the bilayer; the sequence is KKSIAYTLTSNIPEITPFLV. Residues 792–801 lie on the Lumenal side of the membrane; that stretch reads FIIANVPLPL. The helical transmembrane segment at 802–822 threads the bilayer; it reads GTVTILCIDLGTDMVPAISLA. The Cytoplasmic portion of the chain corresponds to 823–842; sequence YERAESDIMKRQPRNPKTDK. Residues 843-865 traverse the membrane as a helical segment; it reads LVNERLISMAYGQIGMIQALGGF. Residues 866 to 917 are Lumenal-facing; that stretch reads FSYFVILAENGFLPIDLIGIREKWDELWTQDLEDSYGQQWTYEQRKIVEYTC. The chain crosses the membrane as a helical span at residues 918 to 937; that stretch reads HTSFFVSIVIVQWADLIICK. Topologically, residues 938–950 are cytoplasmic; that stretch reads TRRNSIFQQGMKN. Position 942 is a phosphoserine; by PKA (serine 942). A helical membrane pass occupies residues 951–969; that stretch reads KILIFGLFEETALAAFLSY. Topologically, residues 970 to 984 are lumenal; sequence TPGTDIALRMYPLKP. Residues 985-1005 form a helical membrane-spanning segment; the sequence is SWWFCAFPYSLIIFLYDEARR. The Cytoplasmic portion of the chain corresponds to 1006–1022; the sequence is FILRRNPGGWVEQETYY.

Belongs to the cation transport ATPase (P-type) (TC 3.A.3) family. Type IIC subfamily. In terms of assembly, the sodium/potassium-transporting ATPase is composed of a catalytic alpha subunit, an auxiliary non-catalytic beta subunit and an additional regulatory subunit.

The protein localises to the cell membrane. The catalysed reaction is K(+)(out) + Na(+)(in) + ATP + H2O = K(+)(in) + Na(+)(out) + ADP + phosphate + H(+). Functionally, this is the catalytic component of the active enzyme, which catalyzes the hydrolysis of ATP coupled with the exchange of sodium and potassium ions across the plasma membrane. This action creates the electrochemical gradient of sodium and potassium ions, providing the energy for active transport of various nutrients. This is Sodium/potassium-transporting ATPase subunit alpha from Tetronarce californica (Pacific electric ray).